The primary structure comprises 719 residues: DNA replication licensing factor MCM7 (719 aa).

Residue A2 is modified to N-acetylalanine. Residues K15 and K28 each participate in a glycyl lysine isopeptide (Lys-Gly) (interchain with G-Cter in SUMO2) cross-link. Phosphoserine is present on residues S121 and S314. Residues 332-538 (FYEKLAASIA…NDLRLAQHIT (207 aa)) enclose the MCM domain. Y345 contributes to the ATP binding site. S365 carries the post-translational modification Phosphoserine. ATP is bound by residues G384, A386, K387, S388, and N489. S500 carries the phosphoserine modification. The Arginine finger signature appears at 513–516 (SRFD). ATP is bound at residue R514. The interval 521–564 (IQDRPDRDNDLRLAQHITYVHQHSRQPPSQFEPLDMKLMRRYIA) is interaction with RAD17. The interaction with ATRIP stretch occupies residues 577-719 (LADYITAAYV…NASRTRITFV (143 aa)). ATP is bound at residue R604. S678 carries the post-translational modification Phosphoserine.

This sequence belongs to the MCM family. Component of the MCM2-7 complex. The complex forms a toroidal hexameric ring with the proposed subunit order MCM2-MCM6-MCM4-MCM7-MCM3-MCM5. Component of the CMG helicase complex, a hexameric ring of related MCM2-7 subunits stabilized by CDC45 and the tetrameric GINS complex. Interacts with the ATR-ATRIP complex and with RAD17. Interacts with TIPIN. Interacts with MCMBP. Interacts with ANKRD17. Component of the replisome complex composed of at least DONSON, MCM2, MCM7, PCNA and TICRR. O-glycosylated (O-GlcNAcylated), in a cell cycle-dependent manner. Post-translationally, ubiquitinated by ECS(LRR1) E3 ubiquitin-protein ligase complex when forks converge following formation of DNA interstrand cross-links. During mitosis, ubiquitinated by TRAIP when forks converge following formation of DNA interstrand cross-links. Short ubiquitin chains on MCM7 promote recruitment of DNA glycosylase NEIL3. If the interstrand cross-link cannot be cleaved by NEIL3, the ubiquitin chains continue to grow on MCM7, promoting the unloading of the CMG helicase complex by the VCP/p97 ATPase.

It localises to the nucleus. Its subcellular location is the chromosome. It catalyses the reaction ATP + H2O = ADP + phosphate + H(+). In terms of biological role, acts as a component of the MCM2-7 complex (MCM complex) which is the replicative helicase essential for 'once per cell cycle' DNA replication initiation and elongation in eukaryotic cells. Core component of CDC45-MCM-GINS (CMG) helicase, the molecular machine that unwinds template DNA during replication, and around which the replisome is built. The active ATPase sites in the MCM2-7 ring are formed through the interaction surfaces of two neighboring subunits such that a critical structure of a conserved arginine finger motif is provided in trans relative to the ATP-binding site of the Walker A box of the adjacent subunit. The six ATPase active sites, however, are likely to contribute differentially to the complex helicase activity. Required for S-phase checkpoint activation upon UV-induced damage. This is DNA replication licensing factor MCM7 from Homo sapiens (Human).